A 232-amino-acid polypeptide reads, in one-letter code: Ribosomal RNA small subunit methyltransferase G (232 aa).

Residues 1–24 (MVDTALHPIPGRRTPPHPRSTLPL) form a disordered region. Residues Gly-91, Leu-96, 142 to 143 (AE), and Arg-160 contribute to the S-adenosyl-L-methionine site.

This sequence belongs to the methyltransferase superfamily. RNA methyltransferase RsmG family.

The protein localises to the cytoplasm. Specifically methylates the N7 position of guanine in position 518 of 16S rRNA. The polypeptide is Ribosomal RNA small subunit methyltransferase G (Corynebacterium efficiens (strain DSM 44549 / YS-314 / AJ 12310 / JCM 11189 / NBRC 100395)).